We begin with the raw amino-acid sequence, 347 residues long: Cell shape-determining protein MreB (347 aa).

Residues 19–21 (TAN), 168–170 (GGT), 216–219 (ERIK), and 296–299 (GGAL) each bind ATP.

This sequence belongs to the FtsA/MreB family. In terms of assembly, forms polymers.

It is found in the cytoplasm. Its function is as follows. Forms membrane-associated dynamic filaments that are essential for cell shape determination. Acts by regulating cell wall synthesis and cell elongation, and thus cell shape. A feedback loop between cell geometry and MreB localization may maintain elongated cell shape by targeting cell wall growth to regions of negative cell wall curvature. This chain is Cell shape-determining protein MreB, found in Escherichia coli O6:H1 (strain CFT073 / ATCC 700928 / UPEC).